The chain runs to 302 residues: 33 kDa chaperonin (302 aa).

Disulfide bonds link Cys-234-Cys-236 and Cys-267-Cys-270.

It belongs to the HSP33 family. Under oxidizing conditions two disulfide bonds are formed involving the reactive cysteines. Under reducing conditions zinc is bound to the reactive cysteines and the protein is inactive.

The protein localises to the cytoplasm. Functionally, redox regulated molecular chaperone. Protects both thermally unfolding and oxidatively damaged proteins from irreversible aggregation. Plays an important role in the bacterial defense system toward oxidative stress. The protein is 33 kDa chaperonin of Neisseria gonorrhoeae (strain NCCP11945).